A 209-amino-acid polypeptide reads, in one-letter code: Guanylate kinase (209 aa).

One can recognise a Guanylate kinase-like domain in the interval 5 to 184; sequence GLLIVFSGPS…AAERVKRVIE (180 aa). Residue 12–19 coordinates ATP; that stretch reads GPSGVGKG.

The protein belongs to the guanylate kinase family.

The protein resides in the cytoplasm. The catalysed reaction is GMP + ATP = GDP + ADP. Its function is as follows. Essential for recycling GMP and indirectly, cGMP. In Streptococcus agalactiae serotype Ia (strain ATCC 27591 / A909 / CDC SS700), this protein is Guanylate kinase.